Here is a 328-residue protein sequence, read N- to C-terminus: MAAYLERCDSVEEDYIDMEVTSFTNLVRKTLSNNYPREFEFQMSHLCPLEIDKTTSPADELFYKGKLLPLHLPPRLQMVQKILEDYTFDDEFYSTPLATGTVTTPVTSNTPFESCTVSPAESCQVSKELNPEDYFLEYSDSLEEDDEKKKSWTTKLRLMKQSSLGTKIKASRAYLRSFFGKTSCSDESSCASSAARVADEDSVLRYSRVKPFGQIKTERPKKQSNGSVSGSHRRSFSVSMRRQAAKSSNNKSSNSLGFRPLQFLKRSTSSSSEIENSIQGAILHCKQSQQQKQKQKQYSTVNEVGFCSLSASRIAARDDQEWAQMFRG.

Residues 213 to 253 form a disordered region; the sequence is GQIKTERPKKQSNGSVSGSHRRSFSVSMRRQAAKSSNNKSS. Residues 223-240 show a composition bias toward polar residues; it reads QSNGSVSGSHRRSFSVSM.

The protein resides in the cell membrane. This is Probable membrane-associated kinase regulator 4 (MAKR4) from Arabidopsis thaliana (Mouse-ear cress).